The sequence spans 97 residues: Secreted Ly-6/uPAR domain-containing protein 2 (97 aa).

An N-terminal signal peptide occupies residues 1 to 22 (MQFHTGLLLAAVLSLQLAAAQA). In terms of domain architecture, UPAR/Ly6 spans 23 to 95 (LWCHQCTGFG…IACCQTSLCN (73 aa)). Cystine bridges form between Cys-25-Cys-47, Cys-28-Cys-34, Cys-40-Cys-68, Cys-72-Cys-88, and Cys-89-Cys-94.

As to quaternary structure, interacts with CHRNA3, CHRNA4, CHRNA5, CHRNA7, CHRNB2 and CHRNB4. Interacts with CHRM1 and CHRM3 probably in an allosteric manner.

It localises to the secreted. Its function is as follows. Binds and may modulate the functional properties of nicotinic and muscarinic acetylcholine receptors. May regulate keratinocytes proliferation, differentiation and apoptosis. In vitro moderately inhibits ACh-evoked currents of alpha-3:beta-2-containing nAChRs, strongly these of alpha-4:beta-2-containing nAChRs, modulates alpha-7-containing nAChRs, and inhibits nicotine-induced signaling probably implicating alpha-3:beta-4-containing nAChRs. Proposed to act on alpha-3:beta-2 and alpha-7 nAChRs in an orthosteric, and on mAChRs, such as CHRM1 and CHRM3, in an allosteric manner. In Macaca mulatta (Rhesus macaque), this protein is Secreted Ly-6/uPAR domain-containing protein 2.